The chain runs to 148 residues: Universal stress protein YxiE (148 aa).

An N-terminal signal peptide occupies residues 1 to 18 (MFNKMLVAIDGSDMSAKA).

It belongs to the universal stress protein A family.

The protein is Universal stress protein YxiE (yxiE) of Bacillus subtilis (strain 168).